A 756-amino-acid chain; its full sequence is MKKLLFTFLVSTGTIFFSCQRTYTQSKDYKNASLTIEERVDALLPKMSLEEKVAQMRIFHANIGVEAEGNGNLKLSDKVIEKLKLGIAGIKNPGEHMDPVAAAKFNNDLQKYIIENNRWGIPALFVTESYNGVDAAGSTRFGRPLTSAASFNPQLVNRIWDVVGREARLRGMHMCHSPEADLVRDPRFGRMSEAFGEDTYLTTQMVVNAINGVQGNYDGLGNGTHIGAVAKHFAGYGQVLGGSNFAAIEISPRTLIDEIYPPFEAAVKEAKTLGIMASHGDINGVASHGNPELLTGVLRDQWGFKGYVVSDSNDIARLFYFMNVAESPEEAAQMGLEAGIDIDLYAEDSYAYLPEMVKKNPNLEKLIDRSVRRVLRTKFILGLFDNPYIDIEEVKKGVRANSSLTLAKESDLESIILLKNENKILPLNKNKTTKIALLGPLVKDDTKSMFETVASKHISFVAEKGFHLTDEKGGAPKLLERDENAISKMVNMAKNSDLSILFLGGDEFTSKEAFFNNALGDRATIEPVGAQDELIEKIKALGKPVIVVLKHRRTLAINTISEQADAILDTWDLSEFGDESTARIIFGEVSPSGKLPVTVPRSIGQIPFHYSMKEINYKKGYLFMEDGPLYPFGYGLSYSNFEYSDIKKSNSEMTKDSEIEVSVTIKNTGNVKAKEVVQMYIKDVKGSVIRPDKELKGFEKISLNPGESKKVSFKITPEMLKFTGLKMEKVLESGEYTVMIGTSSVDYKKTSFQLKK.

The first 18 residues, 1 to 18 (MKKLLFTFLVSTGTIFFS), serve as a signal peptide directing secretion. Residue cysteine 19 is the site of N-palmitoyl cysteine attachment. The S-diacylglycerol cysteine moiety is linked to residue cysteine 19.

The protein belongs to the glycosyl hydrolase 3 family.

Its subcellular location is the cell outer membrane. Its function is as follows. Glycoside hydrolase probably involved in ulvan degradation. Ulvan is the main polysaccharide component of the Ulvales (green seaweed) cell wall. It is composed of disaccharide building blocks comprising 3-sulfated rhamnose (Rha3S) linked to D-glucuronic acid (GlcA), L-iduronic acid (IduA), or D-xylose (Xyl). This chain is Putative beta-xylosidase, found in Formosa agariphila (strain DSM 15362 / KCTC 12365 / LMG 23005 / KMM 3901 / M-2Alg 35-1).